A 509-amino-acid chain; its full sequence is Transcription factor SOX-9 (509 aa).

Disordered regions lie at residues 1–66 (MNLL…ESEE) and 160–271 (RLRV…IDFR). The span at 27–41 (SEGSRGSPCPSGSGS) shows a compositional bias: low complexity. Over residues 42–52 (DTENTRPQENT) the composition is skewed to polar residues. Basic and acidic residues-rich tracts occupy residues 56–66 (GEPDLKKESEE) and 160–174 (RLRV…DYKY). A dimerization (DIM) region spans residues 63 to 103 (ESEEDKFPVCIREAVSQVLKGYDWTLVPMPVRVNGSSKNKP). Residues 63 to 103 (ESEEDKFPVCIREAVSQVLKGYDWTLVPMPVRVNGSSKNKP) are PQA. Position 64 is a phosphoserine (serine 64). The HMG box DNA-binding region spans 105-173 (VKRPMNAFMV…QHKKDHPDYK (69 aa)). The residue at position 211 (serine 211) is a Phosphoserine. Positions 224-307 (PGEHSGQSQG…LPPNGHPGVP (84 aa)) are transactivation domain (TAM). 2 short sequence motifs (9aaTAD) span residues 275-284 (IGELSSDVIS) and 290-298 (DVNEFDQYL). Disordered regions lie at residues 335–415 (WMSK…QHSP) and 420–439 (YSPF…TRSQ). The segment covering 341–359 (APPPPPHPPQQPPPVPQAP) has biased composition (pro residues). Residues 360 to 369 (AQPQAALPQQ) show a composition bias toward low complexity. The span at 380–415 (HTLTTLSSEPGQSQRTHIKTEQLSPSHYSEQQQHSP) shows a compositional bias: polar residues. Positions 394–509 (RTHIKTEQLS…QPVYTQLTRP (116 aa)) are transactivation domain (TAC). A Glycyl lysine isopeptide (Lys-Gly) (interchain with G-Cter in ubiquitin) cross-link involves residue lysine 398. The short motif at 460–468 (SVLYSTFTY) is the 9aaTAD 3 element. The disordered stretch occupies residues 479–509 (PIADTSGVPSIPQTHSPQHWEQPVYTQLTRP). Residues 485–509 (GVPSIPQTHSPQHWEQPVYTQLTRP) show a composition bias toward polar residues.

In terms of assembly, homodimer; homodimerization is required for activity. Interacts (via C-terminus) with ZNF219; forming a complex that binds to the COL2A1 promoter and activates COL2A1 expression. Interacts with DDRGK1. Interacts with EP300/p300. Interacts with beta-catenin (CTNNB1); inhibiting CTNNB1 activity by competing with the binding sites of TCF/LEF within CTNNB1. Post-translationally, acetylated; acetylation impairs nuclear localization and ability to transactivate expression of target genes. Deacetylated by SIRT1. In terms of processing, phosphorylation at Ser-64 and Ser-211 by PKA increases transcriptional activity and may help delay chondrocyte maturation downstream of PTHLH/PTHrP signaling. Phosphorylation at either Ser-64 or Ser-211 is required for sumoylation, but phosphorylation is not dependent on sumoylation. Phosphorylated on tyrosine residues; tyrosine dephosphorylation by PTPN11/SHP2 blocks SOX9 phosphorylation by PKA and subsequent SUMOylation. Sumoylated; phosphorylation at either Ser-64 or Ser-211 is required for sumoylation. Sumoylation is induced by BMP signaling pathway. Post-translationally, ubiquitinated; ubiquitination leads to proteasomal degradation and is negatively regulated by DDRGK1.

It is found in the nucleus. In terms of biological role, transcription factor that plays a key role in chondrocytes differentiation and skeletal development. Specifically binds the 5'-ACAAAG-3' DNA motif present in enhancers and super-enhancers and promotes expression of genes important for chondrogenesis, including cartilage matrix protein-coding genes COL2A1, COL4A2, COL9A1, COL11A2 and ACAN, SOX5 and SOX6. Also binds to some promoter regions. Plays a central role in successive steps of chondrocyte differentiation. Absolutely required for precartilaginous condensation, the first step in chondrogenesis during which skeletal progenitors differentiate into prechondrocytes. Together with SOX5 and SOX6, required for overt chondrogenesis when condensed prechondrocytes differentiate into early stage chondrocytes, the second step in chondrogenesis. Later, required to direct hypertrophic maturation and block osteoblast differentiation of growth plate chondrocytes: maintains chondrocyte columnar proliferation, delays prehypertrophy and then prevents osteoblastic differentiation of chondrocytes by lowering beta-catenin (CTNNB1) signaling and RUNX2 expression. Also required for chondrocyte hypertrophy, both indirectly, by keeping the lineage fate of chondrocytes, and directly, by remaining present in upper hypertrophic cells and transactivating COL10A1 along with MEF2C. Low lipid levels are the main nutritional determinant for chondrogenic commitment of skeletal progenitor cells: when lipids levels are low, FOXO (FOXO1 and FOXO3) transcription factors promote expression of SOX9, which induces chondrogenic commitment and suppresses fatty acid oxidation. Mechanistically, helps, but is not required, to remove epigenetic signatures of transcriptional repression and deposit active promoter and enhancer marks at chondrocyte-specific genes. Acts in cooperation with the Hedgehog pathway-dependent GLI (GLI1 and GLI3) transcription factors. In addition to cartilage development, also acts as a regulator of proliferation and differentiation in epithelial stem/progenitor cells: involved in the lung epithelium during branching morphogenesis, by balancing proliferation and differentiation and regulating the extracellular matrix. Controls epithelial branching during kidney development. The chain is Transcription factor SOX-9 (SOX9) from Sus scrofa (Pig).